We begin with the raw amino-acid sequence, 231 residues long: Orotate phosphoribosyltransferase (231 aa).

5-phospho-alpha-D-ribose 1-diphosphate-binding positions include Lys-27, 79–80 (YK), Arg-106, Lys-107, Lys-110, His-112, and 133–141 (DDVMTAGTA). Orotate contacts are provided by Thr-137 and Arg-166.

It belongs to the purine/pyrimidine phosphoribosyltransferase family. PyrE subfamily. As to quaternary structure, homodimer. Mg(2+) serves as cofactor.

The enzyme catalyses orotidine 5'-phosphate + diphosphate = orotate + 5-phospho-alpha-D-ribose 1-diphosphate. The protein operates within pyrimidine metabolism; UMP biosynthesis via de novo pathway; UMP from orotate: step 1/2. Functionally, catalyzes the transfer of a ribosyl phosphate group from 5-phosphoribose 1-diphosphate to orotate, leading to the formation of orotidine monophosphate (OMP). This is Orotate phosphoribosyltransferase from Bifidobacterium longum (strain DJO10A).